The following is a 320-amino-acid chain: Cytosolic Fe-S cluster assembly factor NUBP1 (320 aa).

An N-acetylmethionine modification is found at M1. Residues C8, C22, C25, and C31 each contribute to the [4Fe-4S] cluster site. G62 to S69 contacts ATP. 2 residues coordinate [4Fe-4S] cluster: C235 and C238.

It belongs to the Mrp/NBP35 ATP-binding proteins family. NUBP1/NBP35 subfamily. In terms of assembly, heterotetramer of 2 NUBP1 and 2 NUBP2 chains. Interacts with KIFC1. Interacts with the BBS/CCT complex subunit CCT1. Requires [4Fe-4S] cluster as cofactor.

The protein localises to the cytoplasm. It localises to the nucleus. Its subcellular location is the cell projection. It is found in the cytoskeleton. The protein resides in the cilium axoneme. The protein localises to the cilium basal body. It localises to the microtubule organizing center. Its subcellular location is the centrosome. It is found in the centriole. Component of the cytosolic iron-sulfur (Fe/S) protein assembly (CIA) machinery. Required for maturation of extramitochondrial Fe-S proteins. The NUBP1-NUBP2 heterotetramer forms a Fe-S scaffold complex, mediating the de novo assembly of an Fe-S cluster and its transfer to target apoproteins. Implicated in the regulation of centrosome duplication. Negatively regulates cilium formation and structure. The sequence is that of Cytosolic Fe-S cluster assembly factor NUBP1 from Bos taurus (Bovine).